Reading from the N-terminus, the 647-residue chain is Threonine--tRNA ligase (647 aa).

The region spanning 1 to 63 (MEVRVEGQMV…PAGCTGIEPV (63 aa)) is the TGS domain. The interval 244-535 (DHRKLGRELS…LVENFAGALP (292 aa)) is catalytic. Residues Cys336, His387, and His512 each coordinate Zn(2+).

The protein belongs to the class-II aminoacyl-tRNA synthetase family. As to quaternary structure, homodimer. Requires Zn(2+) as cofactor.

The protein localises to the cytoplasm. The catalysed reaction is tRNA(Thr) + L-threonine + ATP = L-threonyl-tRNA(Thr) + AMP + diphosphate + H(+). Catalyzes the attachment of threonine to tRNA(Thr) in a two-step reaction: L-threonine is first activated by ATP to form Thr-AMP and then transferred to the acceptor end of tRNA(Thr). Also edits incorrectly charged L-seryl-tRNA(Thr). This Desulfovibrio desulfuricans (strain ATCC 27774 / DSM 6949 / MB) protein is Threonine--tRNA ligase.